Here is a 431-residue protein sequence, read N- to C-terminus: MTATVVIGSQWGDEGKGKIIDFLGQSADVTVRYSGGDNAGHSLVVNDQKLALRLIPSGILAPNSICIIGNGTVINPATLLDEIKELNGVGVNTDHLKISDRAHIVFPYHILQDQQQERDRSKNGEKIGTTNKGIGPAYMDKMQRIGIRAIDLLDNETLEEKIAFNLEQKKRILDEDLWNQLPSLKELTAQYIEYGEILKDYITDTSYLIHTNLNDNKRVLFEGAQGTMLDIDHGTYPFVTSSNPTAGGAATGAGIGVTKIKHVIGVCKSYVSRVGEGPFPTEQINEVGDRIREIAHEYGTVTKRPRRIGWFDGVLMKYVSEVNGLTDLVVNCLDVLSGFKELKICTGYQTDHGVIKYYPASEKELKNSTPIYETLPGWDEDLTQMTTYEELPANAKNYLKKIEEITGVPVSAFSIGPDREQTIVLNDMWSD.

GTP is bound by residues 12-18 and 40-42; these read GDEGKGK and GHS. Asp13 functions as the Proton acceptor in the catalytic mechanism. Residues Asp13 and Gly40 each contribute to the Mg(2+) site. IMP is bound by residues 13–16 and 38–41; these read DEGK and NAGH. His41 functions as the Proton donor in the catalytic mechanism. Positions 114–133 are disordered; the sequence is QQQERDRSKNGEKIGTTNKG. Residues 115–125 show a composition bias toward basic and acidic residues; sequence QQERDRSKNGE. Thr130, Arg144, Gln225, Thr240, and Arg304 together coordinate IMP. 300-306 lines the substrate pocket; the sequence is TVTKRPR. Residues Arg306, 332 to 334, and 414 to 416 contribute to the GTP site; these read CLD and SIG.

It belongs to the adenylosuccinate synthetase family. In terms of assembly, homodimer. It depends on Mg(2+) as a cofactor.

The protein resides in the cytoplasm. It carries out the reaction IMP + L-aspartate + GTP = N(6)-(1,2-dicarboxyethyl)-AMP + GDP + phosphate + 2 H(+). The protein operates within purine metabolism; AMP biosynthesis via de novo pathway; AMP from IMP: step 1/2. Functionally, plays an important role in the de novo pathway of purine nucleotide biosynthesis. Catalyzes the first committed step in the biosynthesis of AMP from IMP. This is Adenylosuccinate synthetase from Pediococcus pentosaceus (strain ATCC 25745 / CCUG 21536 / LMG 10740 / 183-1w).